The sequence spans 283 residues: MASLREIQMRINSTKSTKQITKAMNMVSASKLNRAQAHSAKFQPYMLKMQEVLGTIANGTTGASHPMLEKRPVKKTGYIVITSDRGLAGAYNANVLREVYREINEKHTTDSYVLFVVGKVGVQFFRSRGITVTDAITGLNDSPSYVDVAEIVKRTVSAFTLGEIDELKLCYNHFMSVISQEVKVETLLPLGEIEASSSTTYEYEPSEEQILAELLPRYAESLIFGALLDAKVAEHASRMTAMQSATDNADDLIGRLTLVYNRARQAAITQEITEIVSGAAAQQ.

The protein belongs to the ATPase gamma chain family. In terms of assembly, F-type ATPases have 2 components, CF(1) - the catalytic core - and CF(0) - the membrane proton channel. CF(1) has five subunits: alpha(3), beta(3), gamma(1), delta(1), epsilon(1). CF(0) has three main subunits: a, b and c.

Its subcellular location is the cell membrane. In terms of biological role, produces ATP from ADP in the presence of a proton gradient across the membrane. The gamma chain is believed to be important in regulating ATPase activity and the flow of protons through the CF(0) complex. This Exiguobacterium sibiricum (strain DSM 17290 / CCUG 55495 / CIP 109462 / JCM 13490 / 255-15) protein is ATP synthase gamma chain.